Consider the following 116-residue polypeptide: Holo-[acyl-carrier-protein] synthase (116 aa).

Residues Asp-5 and Glu-50 each coordinate Mg(2+).

Belongs to the P-Pant transferase superfamily. AcpS family. Mg(2+) is required as a cofactor.

The protein localises to the cytoplasm. It catalyses the reaction apo-[ACP] + CoA = holo-[ACP] + adenosine 3',5'-bisphosphate + H(+). Functionally, transfers the 4'-phosphopantetheine moiety from coenzyme A to a Ser of acyl-carrier-protein. This Nitratiruptor sp. (strain SB155-2) protein is Holo-[acyl-carrier-protein] synthase.